The sequence spans 119 residues: Ribonuclease P protein component (119 aa).

Belongs to the RnpA family. Consists of a catalytic RNA component (M1 or rnpB) and a protein subunit.

It catalyses the reaction Endonucleolytic cleavage of RNA, removing 5'-extranucleotides from tRNA precursor.. Its function is as follows. RNaseP catalyzes the removal of the 5'-leader sequence from pre-tRNA to produce the mature 5'-terminus. It can also cleave other RNA substrates such as 4.5S RNA. The protein component plays an auxiliary but essential role in vivo by binding to the 5'-leader sequence and broadening the substrate specificity of the ribozyme. This is Ribonuclease P protein component from Streptococcus pyogenes serotype M12 (strain MGAS2096).